The sequence spans 601 residues: Elongation factor 4 (601 aa).

The tr-type G domain occupies 8–189 (EQIRNFGIIA…LIVRKAPPPK (182 aa)). 20 to 25 (DHGKST) lines the GTP pocket.

It belongs to the TRAFAC class translation factor GTPase superfamily. Classic translation factor GTPase family. LepA subfamily.

Its subcellular location is the cell membrane. The catalysed reaction is GTP + H2O = GDP + phosphate + H(+). Its function is as follows. Required for accurate and efficient protein synthesis under certain stress conditions. May act as a fidelity factor of the translation reaction, by catalyzing a one-codon backward translocation of tRNAs on improperly translocated ribosomes. Back-translocation proceeds from a post-translocation (POST) complex to a pre-translocation (PRE) complex, thus giving elongation factor G a second chance to translocate the tRNAs correctly. Binds to ribosomes in a GTP-dependent manner. This chain is Elongation factor 4, found in Tropheryma whipplei (strain Twist) (Whipple's bacillus).